The chain runs to 426 residues: Trophoblast glycoprotein (426 aa).

An N-terminal signal peptide occupies residues 1 to 31 (MPGAGSRGPSAGDGRLRLARLALVLLGWVSA). At 32–361 (SAPSSSLPSS…ATLPQSLQTS (330 aa)) the chain is on the extracellular side. Over residues 34–51 (PSSSLPSSSTSPAAFLAS) the composition is skewed to low complexity. Positions 34–54 (PSSSLPSSSTSPAAFLASGSA) are disordered. Positions 53–91 (SAQPPPAERCPAACECSEAARTVKCVNRNLLEVPADLPP) constitute an LRRNT domain. Intrachain disulfides connect Cys-62–Cys-68 and Cys-66–Cys-77. 3 LRR repeats span residues 92 to 113 (YVRN…AFAR), 116 to 139 (PLAD…GAFE), and 141 to 163 (LPGL…FTFA). Asn-124 carries an N-linked (GlcNAc...) asparagine glycan. Asn-166 carries an N-linked (GlcNAc...) asparagine glycan. LRR repeat units follow at residues 172–210 (PSPL…AALR), 215–238 (LRGL…LLDQ), 239–261 (LPSL…ASFR), and 262–281 (NLTH…VLHN). N-linked (GlcNAc...) asparagine glycosylation occurs at Asn-281. The region spanning 289-352 (GLAHVRVFLD…LTSSDLDCDA (64 aa)) is the LRRCT domain. Disulfide bonds link Cys-304-Cys-329 and Cys-306-Cys-350. The helical transmembrane segment at 362 to 382 (YVFLGIVLALIGAIFLLVLYL) threads the bilayer. The Cytoplasmic segment spans residues 383 to 426 (NRKGIKKWMHNIRDACRDHMEGYHYRYEINADPRLTNLSSNSDV). A Phosphoserine modification is found at Ser-424.

Post-translationally, highly glycosylated.

The protein resides in the cell membrane. Functionally, may function as an inhibitor of Wnt/beta-catenin signaling by indirectly interacting with LRP6 and blocking Wnt3a-dependent LRP6 internalization. In Rattus norvegicus (Rat), this protein is Trophoblast glycoprotein (Tpbg).